The chain runs to 447 residues: Adenylosuccinate synthetase (447 aa).

GTP-binding positions include 12–18 (GDEGKGK) and 40–42 (GHT). The active-site Proton acceptor is the D13. Residues D13 and G40 each coordinate Mg(2+). IMP contacts are provided by residues 13–16 (DEGK), 38–41 (NAGH), T128, R142, Q223, T238, and R302. The active-site Proton donor is the H41. 298 to 304 (TTTGRKR) provides a ligand contact to substrate. GTP is bound by residues R304, 330-332 (KLD), and 412-414 (SLG).

This sequence belongs to the adenylosuccinate synthetase family. Homodimer. The cofactor is Mg(2+).

The protein resides in the cytoplasm. The catalysed reaction is IMP + L-aspartate + GTP = N(6)-(1,2-dicarboxyethyl)-AMP + GDP + phosphate + 2 H(+). It functions in the pathway purine metabolism; AMP biosynthesis via de novo pathway; AMP from IMP: step 1/2. Its function is as follows. Plays an important role in the de novo pathway of purine nucleotide biosynthesis. Catalyzes the first committed step in the biosynthesis of AMP from IMP. In Nostoc punctiforme (strain ATCC 29133 / PCC 73102), this protein is Adenylosuccinate synthetase.